The chain runs to 318 residues: Glutathione synthetase (318 aa).

In terms of domain architecture, ATP-grasp spans 129–314; sequence KLAITEFPDL…VPEMFAVALE (186 aa). 155–211 provides a ligand contact to ATP; sequence HAAQGDVIVKPLDGMGGTGIFRLQRSEPNLNAILETLTDNGTRTIMAQRYIPEIVKG. Mg(2+) contacts are provided by E285 and N287.

Belongs to the prokaryotic GSH synthase family. It depends on Mg(2+) as a cofactor. Mn(2+) is required as a cofactor.

It carries out the reaction gamma-L-glutamyl-L-cysteine + glycine + ATP = glutathione + ADP + phosphate + H(+). Its pathway is sulfur metabolism; glutathione biosynthesis; glutathione from L-cysteine and L-glutamate: step 2/2. The sequence is that of Glutathione synthetase from Bordetella bronchiseptica (strain ATCC BAA-588 / NCTC 13252 / RB50) (Alcaligenes bronchisepticus).